A 680-amino-acid chain; its full sequence is Protein terminal ear1 homolog (680 aa).

Residues 223-295 (SLVVLNSLPA…RRLVVEYTRP (73 aa)) enclose the RRM domain. 2 disordered regions span residues 294-415 (RPSL…SWRG) and 593-680 (TEPV…GYTD). 2 stretches are compositionally biased toward low complexity: residues 328-340 (PSQSAQPSSSGSG) and 379-403 (SAAAACSTAASASSSTATAPSKQSQ). A compositionally biased stretch (gly residues) spans 404–413 (KGGGGRGGSW). Composition is skewed to low complexity over residues 602–621 (SPAPSSASGASSPPKSCAAS) and 634–648 (SSSGDGASSASSSNA). Positions 656-666 (HGETGGDRGDD) are enriched in basic and acidic residues.

Highly expressed in shoot apex and inflorescence apex, at intermediate levels in roots and at low levels in leaf blade and leaf sheath.

Functionally, probable RNA-binding protein. Involved in the regular timing (plastochron) of lateral organs formation. May regulate the rate of leaf initiation and the duration of vegetative phase. Seems to be redundant to the function of PLASTOCHRON1, but to act in an independent pathway. The protein is Protein terminal ear1 homolog (PLA2) of Oryza sativa subsp. indica (Rice).